The sequence spans 325 residues: MVLPEEPAILEVRHAVRRWIAAHAPDGEIAVALSGGADSLALTAAAAAEARSVCALVVDHRLQPGSADVADEAAARARALGCASAEVLPVDVTGSGGLEAAARQARYRALDSARGTRPVLLGHTLDDQAETVLLGLSRGSGGRSIWGMSAYDTPWGRPLLDVRRALTRQACAELGLSPHEDPHNASPDFVRVRLRTEVLPLLEDVLGGGVAGALARTGEHLREEGAVLDAMAADAQAKAVVEGEIDTALLALSAPPVRRRVLRSWLLAAGARGLGDTQLRAVDDLVARWRGQGQVAIGGGTPDARFVVRRRRGRLNVGLDDRRRV.

Position 34-39 (34-39 (SGGADS)) interacts with ATP.

This sequence belongs to the tRNA(Ile)-lysidine synthase family.

Its subcellular location is the cytoplasm. The enzyme catalyses cytidine(34) in tRNA(Ile2) + L-lysine + ATP = lysidine(34) in tRNA(Ile2) + AMP + diphosphate + H(+). Functionally, ligates lysine onto the cytidine present at position 34 of the AUA codon-specific tRNA(Ile) that contains the anticodon CAU, in an ATP-dependent manner. Cytidine is converted to lysidine, thus changing the amino acid specificity of the tRNA from methionine to isoleucine. The chain is tRNA(Ile)-lysidine synthase from Rhodococcus jostii (strain RHA1).